We begin with the raw amino-acid sequence, 539 residues long: Eukaryotic translation initiation factor 3 subunit L (539 aa).

Residues 306–514 enclose the PCI domain; it reads TFSDILLYIQ…IHIADTKVSH (209 aa).

It belongs to the eIF-3 subunit L family. As to quaternary structure, component of the eukaryotic translation initiation factor 3 (eIF-3) complex. The eIF-3 complex interacts with pix.

It is found in the cytoplasm. Functionally, component of the eukaryotic translation initiation factor 3 (eIF-3) complex, which is involved in protein synthesis of a specialized repertoire of mRNAs and, together with other initiation factors, stimulates binding of mRNA and methionyl-tRNAi to the 40S ribosome. The eIF-3 complex specifically targets and initiates translation of a subset of mRNAs involved in cell proliferation. The polypeptide is Eukaryotic translation initiation factor 3 subunit L (Drosophila sechellia (Fruit fly)).